Reading from the N-terminus, the 198-residue chain is NAD(P)H dehydrogenase (quinone) (198 aa).

The region spanning 4–189 is the Flavodoxin-like domain; the sequence is VLVLYYSMYG…SIARYQGEYV (186 aa). Residues 10–15 and 78–80 contribute to the FMN site; these read SMYGHI and TRF. Position 12 (Tyr12) interacts with NAD(+). Trp98 contributes to the substrate binding site. Residues 113-118 and His133 each bind FMN; that span reads STGTGG.

The protein belongs to the WrbA family. FMN serves as cofactor.

It catalyses the reaction a quinone + NADH + H(+) = a quinol + NAD(+). The enzyme catalyses a quinone + NADPH + H(+) = a quinol + NADP(+). The polypeptide is NAD(P)H dehydrogenase (quinone) (Escherichia fergusonii (strain ATCC 35469 / DSM 13698 / CCUG 18766 / IAM 14443 / JCM 21226 / LMG 7866 / NBRC 102419 / NCTC 12128 / CDC 0568-73)).